The chain runs to 375 residues: Queuine tRNA-ribosyltransferase (375 aa).

Catalysis depends on Asp-90, which acts as the Proton acceptor. Substrate is bound by residues Asp-90–Phe-94, Asp-144, Gln-190, and Gly-217. The tract at residues Gly-248 to Tyr-254 is RNA binding. The active-site Nucleophile is Asp-267. An RNA binding; important for wobble base 34 recognition region spans residues Ala-272 to Arg-276. The Zn(2+) site is built by Cys-305, Cys-307, Cys-310, and His-336.

The protein belongs to the queuine tRNA-ribosyltransferase family. As to quaternary structure, homodimer. Within each dimer, one monomer is responsible for RNA recognition and catalysis, while the other monomer binds to the replacement base PreQ1. Zn(2+) serves as cofactor.

The catalysed reaction is 7-aminomethyl-7-carbaguanine + guanosine(34) in tRNA = 7-aminomethyl-7-carbaguanosine(34) in tRNA + guanine. Its pathway is tRNA modification; tRNA-queuosine biosynthesis. In terms of biological role, catalyzes the base-exchange of a guanine (G) residue with the queuine precursor 7-aminomethyl-7-deazaguanine (PreQ1) at position 34 (anticodon wobble position) in tRNAs with GU(N) anticodons (tRNA-Asp, -Asn, -His and -Tyr). Catalysis occurs through a double-displacement mechanism. The nucleophile active site attacks the C1' of nucleotide 34 to detach the guanine base from the RNA, forming a covalent enzyme-RNA intermediate. The proton acceptor active site deprotonates the incoming PreQ1, allowing a nucleophilic attack on the C1' of the ribose to form the product. After dissociation, two additional enzymatic reactions on the tRNA convert PreQ1 to queuine (Q), resulting in the hypermodified nucleoside queuosine (7-(((4,5-cis-dihydroxy-2-cyclopenten-1-yl)amino)methyl)-7-deazaguanosine). The chain is Queuine tRNA-ribosyltransferase from Borreliella burgdorferi (strain ATCC 35210 / DSM 4680 / CIP 102532 / B31) (Borrelia burgdorferi).